The following is a 320-amino-acid chain: Cytochrome f (320 aa).

The first 35 residues, 1–35, serve as a signal peptide directing secretion; sequence MQNRNTFSWVKEPINRSISVLIIIYVITQTSISNA. Residues Tyr36, Cys56, Cys59, and His60 each contribute to the heme site. Residues 286 to 306 traverse the membrane as a helical segment; it reads VQGLLFFLASVTLAQIFLVLK.

The protein belongs to the cytochrome f family. As to quaternary structure, the 4 large subunits of the cytochrome b6-f complex are cytochrome b6, subunit IV (17 kDa polypeptide, petD), cytochrome f and the Rieske protein, while the 4 small subunits are PetG, PetL, PetM and PetN. The complex functions as a dimer. The cofactor is heme.

The protein localises to the plastid. It is found in the chloroplast thylakoid membrane. Its function is as follows. Component of the cytochrome b6-f complex, which mediates electron transfer between photosystem II (PSII) and photosystem I (PSI), cyclic electron flow around PSI, and state transitions. The protein is Cytochrome f of Piper cenocladum (Ant piper).